Consider the following 25-residue polypeptide: Panurgine K (25 aa).

Cystine bridges form between Cys8/Cys23 and Cys11/Cys19.

It localises to the target cell membrane. It is found in the secreted. Antimicrobial peptide active against Gram-positive bacteria M.luteus (MIC=1.6 uM) and B.subtilis (MIC=3.3 uM). Less active against Gram-negative bacteria E.coli (MIC=63.3 uM) and yeast C.albicans (MIC=24.2 uM). Not active against S.aureus and P.aeruginosa. Has no hemolytic activity against human erythrocytes. Probably acts by disrupting membranes of target cells. In Panurgus calcaratus (Solitary bee), this protein is Panurgine K.